The following is a 212-amino-acid chain: Eukaryotic translation initiation factor 4E-4 (212 aa).

Cys143 and Cys147 form a disulfide bridge.

It belongs to the eukaryotic initiation factor 4E family. In terms of assembly, eIF4F is a multi-subunit complex, the composition of which varies with external and internal environmental conditions. It is composed of at least eIF4A, eIF4E and eIF4G. eIF4E is also known to interact with other partners. As to expression, enriched in somatic cells.

Functionally, recognizes and binds the 7-methylguanosine-containing mRNA cap during an early step in the initiation of protein synthesis and facilitates ribosome binding by inducing the unwinding of the mRNAs secondary structures. All 5 eIF4E proteins bind monomethyl cap structures. Only ife-1, ife-2 and ife-5 bind trimethyl cap structures which result from trans-splicing. Translation of trimethyl cap structure mRNAs may be regulated by intracellular redox state; disulfide bonds change the width and depth of the cap-binding cavity determining selectivity to mRNA caps. The protein is Eukaryotic translation initiation factor 4E-4 (ife-4) of Caenorhabditis elegans.